The primary structure comprises 58 residues: Protein YecU (58 aa).

The chain is Protein YecU from Escherichia coli (strain K12).